The sequence spans 485 residues: Probable cobyric acid synthase (485 aa).

One can recognise a GATase cobBQ-type domain in the interval 250-435; it reads EVEIAVIRLP…LHGLFDNENI (186 aa). Cysteine 328 (nucleophile) is an active-site residue. Residue histidine 427 is part of the active site.

This sequence belongs to the CobB/CobQ family. CobQ subfamily.

It functions in the pathway cofactor biosynthesis; adenosylcobalamin biosynthesis. In terms of biological role, catalyzes amidations at positions B, D, E, and G on adenosylcobyrinic A,C-diamide. NH(2) groups are provided by glutamine, and one molecule of ATP is hydrogenolyzed for each amidation. In Methanosarcina acetivorans (strain ATCC 35395 / DSM 2834 / JCM 12185 / C2A), this protein is Probable cobyric acid synthase.